Consider the following 1460-residue polypeptide: Ankyrin repeat-containing protein kinase A (1460 aa).

7 disordered regions span residues 1-32, 57-181, 216-259, 272-311, 329-354, 374-510, and 551-608; these read MSIKLPLSNINSGGNSNNSSSSNSTSNNNINI, IKQQ…HKSH, RENE…ASST, STSNAATNTNTNANTTSTTKTTSTVRSTSPTQFKPRVEFD, SSPSDFRLNPPSNVHMPTSSLSTSTS, FTPS…SSNP, and CPSA…SSIP. Low complexity-rich tracts occupy residues 8–32, 61–86, and 111–128; these read SNINSGGNSNNSSSSNSTSNNNINI, SNNNTSTSVCVSSIHSSSPISSPTSH, and SSGSNSSSSSSGSNNNNN. The segment covering 129-140 has biased composition (polar residues); it reads QIKTSNGMNKPN. The segment covering 149-162 has biased composition (basic and acidic residues); that stretch reads KPRENSQNKIDDNK. Low complexity-rich tracts occupy residues 220 to 259 and 272 to 300; these read NNNNSSNNNSNNNNNNNNNNNNSNNINNVNGNKSSLASST and STSNAATNTNTNANTTSTTKTTSTVRSTS. Polar residues-rich tracts occupy residues 329–345 and 384–404; these read SSPSDFRLNPPSNVHMP and PTNSSQVDTLQMSTESITIQP. Residues 405-422 show a composition bias toward low complexity; sequence SSLDSSSESVSDGLQSVS. Residues 423-434 show a composition bias toward polar residues; sequence GSPVTASPSPTI. Over residues 435 to 461 the composition is skewed to low complexity; sequence SNNTNATTTNNNNNTNTNNNNNNNNNQ. Positions 462-472 are enriched in basic residues; the sequence is HNHHHHQHSHS. The segment at 467 to 667 is interaction with 14-3-3 protein; sequence HQHSHSQQHD…IFRGCGIPLD (201 aa). The span at 486–497 shows a compositional bias: low complexity; it reads PSSPTSPTLLPS. The Phorbol-ester/DAG-type zinc-finger motif lies at 499–551; it reads THDFSSEYSSNPGGKCAICRKPLWSFPISDKSRRCRDCSLVVHRACVPLATEC. The segment covering 559–568 has biased composition (polar residues); it reads SKLSVPNGNQ. A compositionally biased stretch (low complexity) spans 569–608; sequence SNSSSSSSSSSSSSSSSNSSSSNTKGHSRTPSSPSVSSIP. In terms of domain architecture, GRAM spans 653–724; that stretch reads RDFHFIFRGC…SNIASIEKRS (72 aa). ANK repeat units lie at residues 814-843, 852-883, 887-920, 924-955, and 959-988; these read SKEILLMSAIKNNNLDMVVTLLNYYCQVNS, KGYTPLHNAVFSECSDQIFMHLLNQKEVRVRE, DGNTPLHYFCQKFKSPECQRIVQAMIEKGANINE, NGETPLHKAIFNHSVRLLMVYILLKNNANVNI, and AGESPLHYAVRLGRLDVAKMLLAAGADPTI. One can recognise a Protein kinase domain in the interval 1112–1375; sequence LEYTEKIGSG…ATEAMTALAV (264 aa). ATP-binding positions include 1118-1126 and K1139; that span reads IGSGASGKV. The active-site Proton acceptor is the D1231. The helical transmembrane segment at 1293–1313 threads the bilayer; the sequence is MGIVMWEIVYCVVYGCYMIPY. Positions 1425–1460 form a coiled coil; it reads PEEEQIYQEAMEKQRRNQEASANRNQKNKELLNNNN. A disordered region spans residues 1434 to 1460; that stretch reads AMEKQRRNQEASANRNQKNKELLNNNN.

It belongs to the protein kinase superfamily. TKL Ser/Thr protein kinase family.

The protein resides in the cytoplasm. It is found in the cytoskeleton. It localises to the membrane. The protein localises to the nucleus. It carries out the reaction L-seryl-[protein] + ATP = O-phospho-L-seryl-[protein] + ADP + H(+). The enzyme catalyses L-threonyl-[protein] + ATP = O-phospho-L-threonyl-[protein] + ADP + H(+). Functionally, involved in the development of the fruiting body. Overexpression phenocopies the spnA null phenotype. The protein is Ankyrin repeat-containing protein kinase A (arkA) of Dictyostelium discoideum (Social amoeba).